Reading from the N-terminus, the 483-residue chain is Aspartyl/glutamyl-tRNA(Asn/Gln) amidotransferase subunit B (483 aa).

The protein belongs to the GatB/GatE family. GatB subfamily. Heterotrimer of A, B and C subunits.

It catalyses the reaction L-glutamyl-tRNA(Gln) + L-glutamine + ATP + H2O = L-glutaminyl-tRNA(Gln) + L-glutamate + ADP + phosphate + H(+). It carries out the reaction L-aspartyl-tRNA(Asn) + L-glutamine + ATP + H2O = L-asparaginyl-tRNA(Asn) + L-glutamate + ADP + phosphate + 2 H(+). Allows the formation of correctly charged Asn-tRNA(Asn) or Gln-tRNA(Gln) through the transamidation of misacylated Asp-tRNA(Asn) or Glu-tRNA(Gln) in organisms which lack either or both of asparaginyl-tRNA or glutaminyl-tRNA synthetases. The reaction takes place in the presence of glutamine and ATP through an activated phospho-Asp-tRNA(Asn) or phospho-Glu-tRNA(Gln). The sequence is that of Aspartyl/glutamyl-tRNA(Asn/Gln) amidotransferase subunit B from Brachyspira hyodysenteriae (strain ATCC 49526 / WA1).